The chain runs to 312 residues: Phosphate system positive regulatory protein PHO4 (312 aa).

The segment at 1-31 is interaction with PHO80; sequence MGRTTSEGIHGFVDDLEPKSSILDKVGDFIT. The segment at 35–71 is disordered; the sequence is KRHDGREDFNEQNDELNSQENHNSSENGNENENEQDS. A compositionally biased stretch (low complexity) spans 49 to 62; that stretch reads ELNSQENHNSSENG. The short motif at 75-83 is the 9aaTAD element; it reads DDLDRAFEL. The transcription activation domain stretch occupies residues 75–99; it reads DDLDRAFELVEGMDMDWMMPSHAHH. S100, S114, S128, and S152 each carry phosphoserine; by PHO85. 2 stretches are compositionally biased toward polar residues: residues 138-154 and 196-210; these read TTSANKVTKNKSNSSPY and PSNSTRRVSPVTAKT. The tract at residues 138-259 is disordered; the sequence is TTSANKVTKN…DKRESHKHAE (122 aa). The Nuclear localization signal motif lies at 140-166; that stretch reads SANKVTKNKSNSSPYLNKRRGKPGPDS. The tract at residues 156 to 200 is interaction with PHO80; the sequence is NKRRGKPGPDSATSLFELPDSVIPTPKPKPKPKQYPKVILPSNST. Residues 201 to 218 are interaction with PHO2; it reads RRVSPVTAKTSSSAEGVV. The segment at 203–227 is involved in oligomerization; sequence VSPVTAKTSSSAEGVVVASESPVIA. Position 204 is a phosphoserine (S204). A compositionally biased stretch (low complexity) spans 211 to 235; the sequence is SSSAEGVVVASESPVIAPHGSSHSR. S223 carries the post-translational modification Phosphoserine; by PHO85. 2 positions are modified to phosphoserine: S242 and S243. Residues 248 to 259 show a composition bias toward basic and acidic residues; the sequence is DDDKRESHKHAE. Positions 250–306 constitute a bHLH domain; the sequence is DKRESHKHAEQARRNRLAVALHELASLIPAEWKQQNVSAAPSKATTVEAACRYIRHL.

As to quaternary structure, binds DNA as a homodimer. Interacts with transcription factor PHO2 and binds cooperatively to PHO5 UAS. Interacts with the cyclin-CDK PHO80-PHO85 and the CDK inhibitor (CKI) PHO81. In terms of processing, phosphorylated by the cyclin-CDK PHO80-PHO85 at five residues under high-phosphate conditions, preventing PHO4 from activating the structural PHO genes. Phosphorylation of Ser-114 and Ser-128 promotes nuclear export. Phosphorylation of Ser-152 decreases nuclear import. Phosphorylation of Ser-223 decreases the binding affinity for PHO2.

It localises to the cytoplasm. It is found in the nucleus. Its function is as follows. Transcriptional activator that regulates the expression of repressible phosphatase under phosphate starvation conditions. Binds to the upstream activating sequence (UAS) of several phosphatase encoding PHO genes. Inhibited by the cyclin-CDK PHO80-PHO85 under high-phosphate conditions. This Saccharomyces cerevisiae (strain ATCC 204508 / S288c) (Baker's yeast) protein is Phosphate system positive regulatory protein PHO4 (PHO4).